The chain runs to 321 residues: Probable cell division protein WhiA (321 aa).

Positions 275–308 (SLDELGRLADPPMTKDAVAGRIRRLLAMADKRAA) form a DNA-binding region, H-T-H motif.

The protein belongs to the WhiA family.

Functionally, involved in cell division and chromosome segregation. This is Probable cell division protein WhiA from Micrococcus luteus (strain ATCC 4698 / DSM 20030 / JCM 1464 / CCM 169 / CCUG 5858 / IAM 1056 / NBRC 3333 / NCIMB 9278 / NCTC 2665 / VKM Ac-2230) (Micrococcus lysodeikticus).